Here is a 632-residue protein sequence, read N- to C-terminus: MSCFYLDLLKIKDPSFMKQLDIQELEALAADIRAFLITSTSKSGGHIGPNLGVVELTIALHYTFNSPNDKFIWDVGHQSYVHKILTGRASQFDTLRQHGGLDGFPKRKESIHDVFETGHSSTSLSAAVGMVIARDIKKEDFYVIPIIGDGALTGGMAFEALNHIGDMGKDMIVILNDNDMSIAPNVGALHNVLGKLRTSNTFQQTKTNIDKLMRKIPTAGEKLADTAEKAKDGIKHLLVEGTFFEELGFMYLGPIDGHNLEDVITNLEIAKRTKGPVLLHIITKKGKGYQPAELDSRGTWHGTGPYKVETGSFIKPAKTVASWSSVISNELMRLAANDERIVAITPAMPVGSKLEKFAKTFPERFFDVGIAEQHATTMAAGLATQAMKPFLAIYSTFLQRAYDQLVHDVCRQKLNVVIGIDRAGLVGADGETHQGIFDISFLNSIPNMIITMPKDEEEARQLMDTAFAYDDGPFAIRYPRGNGPGKELSESSKLIPIGEWETIIQPVDAVILTFGPTLEQALKAAEQLEDLGQRVGVINARFIKPLDEALLHRIFKQKIPILTVEESLLKGGFGASVLEFMEENNYTDVTIHRIGLPDEFIGHGSVPLILESYGISPTGIVLKINEMLAQSE.

Residues histidine 77 and 118–120 (GHS) each bind thiamine diphosphate. A Mg(2+)-binding site is contributed by aspartate 149. Thiamine diphosphate is bound by residues 150–151 (GA), asparagine 178, tyrosine 289, and glutamate 372. Asparagine 178 is a binding site for Mg(2+).

This sequence belongs to the transketolase family. DXPS subfamily. As to quaternary structure, homodimer. Mg(2+) serves as cofactor. Thiamine diphosphate is required as a cofactor.

The enzyme catalyses D-glyceraldehyde 3-phosphate + pyruvate + H(+) = 1-deoxy-D-xylulose 5-phosphate + CO2. Its pathway is metabolic intermediate biosynthesis; 1-deoxy-D-xylulose 5-phosphate biosynthesis; 1-deoxy-D-xylulose 5-phosphate from D-glyceraldehyde 3-phosphate and pyruvate: step 1/1. Functionally, catalyzes the acyloin condensation reaction between C atoms 2 and 3 of pyruvate and glyceraldehyde 3-phosphate to yield 1-deoxy-D-xylulose-5-phosphate (DXP). The polypeptide is 1-deoxy-D-xylulose-5-phosphate synthase (Listeria innocua serovar 6a (strain ATCC BAA-680 / CLIP 11262)).